We begin with the raw amino-acid sequence, 592 residues long: Multidrug transporter AQR1 (592 aa).

A disordered region spans residues 1-77; sequence MVESGPHSIN…EISSTHSQDA (77 aa). Residues 99 to 119 form a helical membrane-spanning segment; the sequence is WCMVALLTACGFWSSLGSPIY. Asn138 carries an N-linked (GlcNAc...) asparagine glycan. The next 5 helical transmembrane spans lie at 139 to 159, 166 to 186, 188 to 208, 231 to 251, and 255 to 275; these read ITVV…GGLA, PVLL…ACAP, YGVI…SIAI, GFVL…AAAW, and AIFW…FALL. Residue Asn285 is glycosylated (N-linked (GlcNAc...) asparagine). 6 consecutive transmembrane segments (helical) span residues 340–360, 374–394, 432–452, 459–479, 497–517, and 523–543; these read IFLS…MLSA, LTII…GSFA, LQSV…FGWS, IPSI…TLSA, SCFN…FAKM, and VGGT…LMFI.

Belongs to the major facilitator superfamily. CAR1 family.

Its subcellular location is the cell membrane. Multidrug transporter acts as a determinant of resistance to acetic acid, flucytosine and clotrimazole, these 3 compounds acting synergistically against the pathogen. Reduces the intracellular accumulation of the antifungal agents flucytosine and, to a moderate extent, of clotrimazole. Its role in acetic acid resistance may be indirect, presumably through the transport of a still unidentified physiological substrate. The protein is Multidrug transporter AQR1 of Candida glabrata (strain ATCC 2001 / BCRC 20586 / JCM 3761 / NBRC 0622 / NRRL Y-65 / CBS 138) (Yeast).